The sequence spans 444 residues: Phosphoglucosamine mutase (444 aa).

The active-site Phosphoserine intermediate is the serine 100. The Mg(2+) site is built by serine 100, aspartate 240, aspartate 242, and aspartate 244. Residue serine 100 is modified to Phosphoserine.

The protein belongs to the phosphohexose mutase family. Mg(2+) is required as a cofactor. In terms of processing, activated by phosphorylation.

The enzyme catalyses alpha-D-glucosamine 1-phosphate = D-glucosamine 6-phosphate. Catalyzes the conversion of glucosamine-6-phosphate to glucosamine-1-phosphate. This Moorella thermoacetica (strain ATCC 39073 / JCM 9320) protein is Phosphoglucosamine mutase.